A 589-amino-acid chain; its full sequence is Guanylate-binding protein 1 (589 aa).

The interval 1 to 309 (MASEIHMSEP…SAICSGELPC (309 aa)) is GTPase domain (Globular). The GB1/RHD3-type G domain maps to 35-276 (TQPVVVVAIV…FTSYIFSYSG (242 aa)). GTP-binding positions include 47–53 (YRTGKSY), 67–69 (LGS), and 97–101 (DTEGL). At Ser156 the chain carries Phosphoserine. At Cys586 the chain carries Cysteine methyl ester. Cys586 is lipidated: S-farnesyl cysteine. Cys586 carries the S-geranylgeranyl cysteine; partial lipid modification. Residue Thr587 is modified to Phosphothreonine. Residues 587–589 (TIL) constitute a propeptide, removed in mature form.

Belongs to the TRAFAC class dynamin-like GTPase superfamily. GB1/RHD3 GTPase family. GB1 subfamily. Homodimer; homodimerization occurs upon GTP-binding and is required for the second hydrolysis step from GDP to GMP. Undergoes conformational changes and oligomerization upon GTP-binding and hydrolysis. Heterodimer with other family members, including GBP2, GBP3, GBP4 and GBP5. Dimerization regulates subcellular location to membranous structures. Interacts with SQSTM1. Interacts (when phosphorylated) with 14-3-3 protein sigma (SFN); leading to GBP1 retention in the cytosol and inactivation. Post-translationally, isoprenylation of mouse GBP1 is incomplete. It persistently exists in the cell as a mixture of C20-modified and (more predominantly) unmodified form. Isoprenylation is required for proper subcellular location. In terms of processing, phosphorylated at Ser-156 by PIM1 in absence of infection, inhibits GBP1: phosphorylation promotes interaction with 14-3-3 protein sigma (SFN), leading to GBP1 retention in the cytosol. Dephosphorylated in response to infection, liberating GBP1.

It is found in the cytoplasmic vesicle membrane. The protein resides in the golgi apparatus membrane. The protein localises to the cell membrane. Its subcellular location is the cytoplasm. It localises to the cytosol. It is found in the secreted. The enzyme catalyses GTP + H2O = GDP + phosphate + H(+). It carries out the reaction GDP + H2O = GMP + phosphate + H(+). Interferon (IFN)-inducible GTPase that plays important roles in innate immunity against a diverse range of bacterial, viral and protozoan pathogens. Hydrolyzes GTP to GMP in two consecutive cleavage reactions: GTP is first hydrolyzed to GDP and then to GMP in a processive manner. Following infection, recruited to the pathogen-containing vacuoles or vacuole-escaped bacteria and promotes both inflammasome assembly and autophagy. Acts as a positive regulator of inflammasome assembly by facilitating the detection of inflammasome ligands from pathogens. Involved in the lysis of pathogen-containing vacuoles, releasing pathogens into the cytosol. Following pathogen release in the cytosol, forms a protein coat in a GTPase-dependent manner that encapsulates pathogens and promotes the detection of ligands by pattern recognition receptors. Plays a key role in inflammasome assembly in response to infection by Gram-negative bacteria: following pathogen release in the cytosol, forms a protein coat that encapsulates Gram-negative bacteria and directly binds to lipopolysaccharide (LPS), disrupting the O-antigen barrier and unmasking lipid A that is that detected by the non-canonical inflammasome effector CASP4/CASP11. Also promotes recruitment of proteins that mediate bacterial cytolysis, leading to release double-stranded DNA (dsDNA) that activates the AIM2 inflammasome. Involved in autophagy by regulating bacteriolytic peptide generation via its interaction with ubiquitin-binding protein SQSTM1, which delivers monoubiquitinated proteins to autolysosomes for the generation of bacteriolytic peptides. Confers protection to several pathogens, including the bacterial pathogens L.monocytogenes and M.bovis BCG as well as the protozoan pathogen T.gondii. Exhibits antiviral activity against influenza virus. This is Guanylate-binding protein 1 (Gbp1) from Mus musculus (Mouse).